Reading from the N-terminus, the 579-residue chain is Putative adenine deaminase OB0751 (579 aa).

The protein belongs to the metallo-dependent hydrolases superfamily. Adenine deaminase family.

The catalysed reaction is adenine + H2O + H(+) = hypoxanthine + NH4(+). The protein is Putative adenine deaminase OB0751 of Oceanobacillus iheyensis (strain DSM 14371 / CIP 107618 / JCM 11309 / KCTC 3954 / HTE831).